A 215-amino-acid polypeptide reads, in one-letter code: Peroxiredoxin 1 (215 aa).

The Thioredoxin domain maps to 1 to 157 (MKLYQKFPET…LLRITKAALV (157 aa)). Cys45 (cysteine sulfenic acid (-SOH) intermediate) is an active-site residue. Arg120 contributes to the substrate binding site.

Belongs to the peroxiredoxin family. Prx6 subfamily. As to quaternary structure, homodecamer. Pentamer of dimers that assemble into a ring structure.

It localises to the cytoplasm. The catalysed reaction is a hydroperoxide + [thioredoxin]-dithiol = an alcohol + [thioredoxin]-disulfide + H2O. Functionally, thiol-specific peroxidase that catalyzes the reduction of hydrogen peroxide and organic hydroperoxides to water and alcohols, respectively. Plays a role in cell protection against oxidative stress by detoxifying peroxides. This chain is Peroxiredoxin 1, found in Sulfuracidifex metallicus (Sulfolobus metallicus).